The following is a 252-amino-acid chain: MSLPATFDLTTEDAQLLLAANTHLGARNVQVHQEPYVFKTRPDGVNVVDVGKTWEKLVLAARIIAAIPNPEDIVAISSRTFGQRAVLKFSAHTGATPIAGRFTPGSFTNYITRSFKEPRLIIVTDPRSDAQAIKEASYVNIPVIALTDLDSPSEYVDVAIPCNNRGKHSIGLIWYLLAREVLRLRGALVDRTQPWSVMPDLYFYRNPEEIEQQVAEETAGAATEEEEAKEEVTEEQTEATEWAEETTEAVAW.

S2 is subject to N-acetylserine. Low complexity predominate over residues 213–222 (QVAEETAGAA). A disordered region spans residues 213–252 (QVAEETAGAATEEEEAKEEVTEEQTEATEWAEETTEAVAW). Positions 223–252 (TEEEEAKEEVTEEQTEATEWAEETTEAVAW) are enriched in acidic residues.

It belongs to the universal ribosomal protein uS2 family. In terms of assembly, component of the small ribosomal subunit. Mature ribosomes consist of a small (40S) and a large (60S) subunit. The 40S subunit contains about 33 different proteins and 1 molecule of RNA (18S). The 60S subunit contains about 49 different proteins and 3 molecules of RNA (25S, 5.8S and 5S). Interacts with RPS21.

It is found in the cytoplasm. Functionally, required for the assembly and/or stability of the 40S ribosomal subunit. Required for the processing of the 20S rRNA-precursor to mature 18S rRNA in a late step of the maturation of 40S ribosomal subunits. In Zygosaccharomyces rouxii (strain ATCC 2623 / CBS 732 / NBRC 1130 / NCYC 568 / NRRL Y-229), this protein is Small ribosomal subunit protein uS2.